The sequence spans 222 residues: Superoxide dismutase [Mn], mitochondrial (222 aa).

Residues 1–24 constitute a mitochondrion transit peptide; sequence MLCRAACSTGRRLGPVAGAAGSRH. His50 is a binding site for Mn(2+). The residue at position 58 (Tyr58) is a 3'-nitrotyrosine. 2 positions are modified to N6-acetyllysine; alternate: Lys68 and Lys75. An N6-succinyllysine; alternate mark is found at Lys68 and Lys75. His98 contacts Mn(2+). N6-acetyllysine is present on Lys114. An N6-acetyllysine; alternate mark is found at Lys122 and Lys130. N6-succinyllysine; alternate is present on residues Lys122 and Lys130. Residues Asp183 and His187 each coordinate Mn(2+). Residue Lys202 is modified to N6-acetyllysine.

The protein belongs to the iron/manganese superoxide dismutase family. Homotetramer. It depends on Mn(2+) as a cofactor. In terms of processing, nitrated under oxidative stress. Nitration coupled with oxidation inhibits the catalytic activity. Post-translationally, acetylation at Lys-122 decreases enzymatic activity. Deacetylated by SIRT3 upon exposure to ionizing radiations or after long fasting. Polyubiquitinated; leading to proteasomal degradation. Deubiquitinated by USP36 which increases protein stability.

The protein resides in the mitochondrion matrix. The catalysed reaction is 2 superoxide + 2 H(+) = H2O2 + O2. Destroys superoxide anion radicals which are normally produced within the cells and which are toxic to biological systems. The protein is Superoxide dismutase [Mn], mitochondrial (Sod2) of Mus musculus (Mouse).